The primary structure comprises 306 residues: tRNA dimethylallyltransferase (306 aa).

Residue 9–16 (GPTAIGKT) coordinates ATP. A substrate-binding site is contributed by 11–16 (TAIGKT). The interval 34-37 (DSMQ) is interaction with substrate tRNA.

Belongs to the IPP transferase family. In terms of assembly, monomer. Mg(2+) is required as a cofactor.

The enzyme catalyses adenosine(37) in tRNA + dimethylallyl diphosphate = N(6)-dimethylallyladenosine(37) in tRNA + diphosphate. In terms of biological role, catalyzes the transfer of a dimethylallyl group onto the adenine at position 37 in tRNAs that read codons beginning with uridine, leading to the formation of N6-(dimethylallyl)adenosine (i(6)A). This is tRNA dimethylallyltransferase from Lactobacillus acidophilus (strain ATCC 700396 / NCK56 / N2 / NCFM).